Reading from the N-terminus, the 27-residue chain is Protamine-A (27 aa).

Positions 1 to 27 are disordered; it reads ARRRRRHASTKLKRRRRRRRHGKKSHK.

As to expression, testis.

Its subcellular location is the nucleus. The protein resides in the chromosome. In terms of biological role, protamines substitute for histones in the chromatin of sperm during the haploid phase of spermatogenesis. They compact sperm DNA into a highly condensed, stable and inactive complex. This is Protamine-A from Acipenser stellatus (Sevruga).